The following is a 76-amino-acid chain: Conotoxin VnMEKL-0111 (76 aa).

The N-terminal stretch at 1–18 (MKLTILFLVAAVLMSTQA) is a signal peptide. Residues 19 to 45 (LIQHDGEKSQKAKMKFLTARTLSAKTR) constitute a propeptide that is removed on maturation. Disulfide bonds link Cys49/Cys65, Cys56/Cys70, and Cys64/Cys74.

It belongs to the conotoxin O2 superfamily. As to expression, expressed by the venom duct.

It is found in the secreted. The protein is Conotoxin VnMEKL-0111 of Conus ventricosus (Mediterranean cone).